Here is a 928-residue protein sequence, read N- to C-terminus: Probable outer membrane protein pmp10 (928 aa).

Residues 1–25 (MKSQFSWLVLSSTLACFTSCSTVFA) form the signal peptide. The region spanning 635 to 928 (TLCSDRGFWA…NVDLGGKFQF (294 aa)) is the Autotransporter domain.

It belongs to the PMP outer membrane protein family.

The protein resides in the secreted. The protein localises to the cell wall. Its subcellular location is the cell outer membrane. The protein is Probable outer membrane protein pmp10 (pmp10) of Chlamydia pneumoniae (Chlamydophila pneumoniae).